Here is a 608-residue protein sequence, read N- to C-terminus: MWLQQRLKVFPGLLSSSWARRVLAVSGFLVIIYWYIFSGSLFRSFWYAGPPRGISGACLHGQTMQWKALAEKGDVVMVSFPGEETKMQGPTMVGNGHIIVDVGKNNLWVSSLSVLFHLTNYSPLTFVKSVGALAETHATAIFFKEGLIRTIRCLQMEASDSSHDCVTVREDHFAHRSRPHVYVQKIHIANPSDRVVTFDISSQKPLTGETFTTSVEKVQERQFLLSSGRVSVEDGKIILVVVATKKLVSRLQVSPKSDYDETVFSVVYASEPIDPGKVSDTFSKLRESAKKEMFELMHMKTEDLFHEHQQIWSDLFVSGIEMKKIKDLHTPSRDTINITLYYMLSCSLAPLVDPILSNEERDKMESFLNYADHCFTGHSTMHAENLWPSSLSGITQLLQLWDLWKLTLQKRGCKSLVSAGAHGLMQGMLLSFGGLQFTENHLQFQSDPHVLHNSYSLRGVHYNKDLINLAVLLDKDEKPFLHVSVKFQDKLVKLYACEAGCLNEPVELTSEIRGHIFPVLVTQPLTPLLYISTDLTHLQDLRHTLHLKEILAHEEHMAKQYRGLPFLFWFSVASLITLFHLFLFKLIYNEYCGPGAKPLFRSKEDTSV.

The first 38 residues, 1 to 38 (MWLQQRLKVFPGLLSSSWARRVLAVSGFLVIIYWYIFS), serve as a signal peptide directing secretion. Residues 39–563 (GSLFRSFWYA…EEHMAKQYRG (525 aa)) lie on the Extracellular side of the membrane. N-linked (GlcNAc...) asparagine glycosylation is present at asparagine 337. A helical membrane pass occupies residues 564–584 (LPFLFWFSVASLITLFHLFLF). Residues 585-608 (KLIYNEYCGPGAKPLFRSKEDTSV) lie on the Cytoplasmic side of the membrane.

It localises to the membrane. This is an uncharacterized protein from Xenopus tropicalis (Western clawed frog).